The primary structure comprises 851 residues: Putative cell signaling protein (851 aa).

Composition is skewed to basic and acidic residues over residues Lys-165–Asn-176, Asp-196–Lys-223, and Ser-767–Asp-781. 2 disordered regions span residues Lys-165–Lys-223 and Asp-714–Asp-781.

In terms of processing, palmitoylated.

This is Putative cell signaling protein from Schizosaccharomyces pombe (strain 972 / ATCC 24843) (Fission yeast).